The sequence spans 68 residues: Protein transport protein Sec61 gamma-1 subunit (68 aa).

Residues 1–32 (MDKVVKFAEPGRAFAKDSIRLVKRCTKPDRKE) are Cytoplasmic-facing. The chain crosses the membrane as a helical span at residues 33-61 (FQKIAIATAVGFAIMGFIGFFVKLIHIPI). The Extracellular portion of the chain corresponds to 62–68 (NNIIVGS).

Belongs to the SecE/SEC61-gamma family. As to quaternary structure, heterotrimeric complex composed of SEC61-alpha, SEC61-beta and SEC61-gamma.

The protein localises to the endoplasmic reticulum membrane. Necessary for protein translocation in the endoplasmic reticulum. This chain is Protein transport protein Sec61 gamma-1 subunit (SEC61G1), found in Drosophila melanogaster (Fruit fly).